The chain runs to 312 residues: DNA-directed RNA polymerase subunit alpha (312 aa).

The tract at residues 1 to 226 (MIEFEKPKIT…DHLNLFVDLS (226 aa)) is alpha N-terminal domain (alpha-NTD). The interval 243-312 (TERVLDKIIE…ELGLSLKKRK (70 aa)) is alpha C-terminal domain (alpha-CTD).

Belongs to the RNA polymerase alpha chain family. In terms of assembly, homodimer. The RNAP catalytic core consists of 2 alpha, 1 beta, 1 beta' and 1 omega subunit. When a sigma factor is associated with the core the holoenzyme is formed, which can initiate transcription.

The catalysed reaction is RNA(n) + a ribonucleoside 5'-triphosphate = RNA(n+1) + diphosphate. DNA-dependent RNA polymerase catalyzes the transcription of DNA into RNA using the four ribonucleoside triphosphates as substrates. The polypeptide is DNA-directed RNA polymerase subunit alpha (Lactococcus lactis subsp. lactis (strain IL1403) (Streptococcus lactis)).